The primary structure comprises 485 residues: Cysteine protease atg4da (485 aa).

The interval 22 to 46 is disordered; that stretch reads ASASSKRHLGHGAVPDGIREGSGEP. Cys131 serves as the catalytic Nucleophile. Residues Asp368 and His370 contribute to the active site.

This sequence belongs to the peptidase C54 family.

The protein resides in the cytoplasm. The catalysed reaction is [protein]-C-terminal L-amino acid-glycyl-phosphatidylethanolamide + H2O = [protein]-C-terminal L-amino acid-glycine + a 1,2-diacyl-sn-glycero-3-phosphoethanolamine. It carries out the reaction [protein]-C-terminal L-amino acid-glycyl-phosphatidylserine + H2O = [protein]-C-terminal L-amino acid-glycine + a 1,2-diacyl-sn-glycero-3-phospho-L-serine. In terms of biological role, cysteine protease that plays a key role in autophagy by mediating both proteolytic activation and delipidation of ATG8 family proteins. The protease activity is required for proteolytic activation of ATG8 family proteins to reveal a C-terminal glycine. Exposure of the glycine at the C-terminus is essential for ATG8 proteins conjugation to phosphatidylethanolamine (PE) and insertion to membranes, which is necessary for autophagy. In addition to the protease activity, also mediates delipidation of ATG8 family proteins. Catalyzes delipidation of PE-conjugated forms of ATG8 proteins during macroautophagy. Also involved in non-canonical autophagy, a parallel pathway involving conjugation of ATG8 proteins to single membranes at endolysosomal compartments, by catalyzing delipidation of ATG8 proteins conjugated to phosphatidylserine (PS). ATG4D plays a role in the autophagy-mediated neuronal homeostasis in the central nervous system. The sequence is that of Cysteine protease atg4da from Danio rerio (Zebrafish).